A 643-amino-acid chain; its full sequence is 3D-(3,5/4)-trihydroxycyclohexane-1,2-dione hydrolase (643 aa).

Glu-65 lines the thiamine diphosphate pocket. The thiamine pyrophosphate binding stretch occupies residues 441–521 (SLPGDLQRMW…VNVLLFDNCG (81 aa)). 2 residues coordinate Mg(2+): Asp-492 and Asn-519.

This sequence belongs to the TPP enzyme family. Mg(2+) is required as a cofactor. Thiamine diphosphate serves as cofactor.

It catalyses the reaction 3D-3,5/4-trihydroxycyclohexane-1,2-dione + H2O = 5-deoxy-D-glucuronate + H(+). The protein operates within polyol metabolism; myo-inositol degradation into acetyl-CoA; acetyl-CoA from myo-inositol: step 3/7. In terms of biological role, involved in the cleavage of the C1-C2 bond of 3D-(3,5/4)-trihydroxycyclohexane-1,2-dione (THcHDO) to yield 5-deoxy-glucuronate (5DG). In Clostridium botulinum (strain Alaska E43 / Type E3), this protein is 3D-(3,5/4)-trihydroxycyclohexane-1,2-dione hydrolase.